The following is a 436-amino-acid chain: Transcriptional regulator VdtR (436 aa).

The zn(2)-C6 fungal-type DNA-binding region spans 17–44; it reads CDRCSANKVKCTQEKPECERCRLLSLPC. Disordered stretches follow at residues 51–147 and 173–192; these read RIGK…HDKG and TAREDQKQHPELRSEEEYSD. The span at 125-141 shows a compositional bias: polar residues; that stretch reads SHNSNRPTNMASTNQDQ. Basic and acidic residues predominate over residues 174–192; the sequence is AREDQKQHPELRSEEEYSD.

Its subcellular location is the nucleus. In terms of biological role, transcription factor that regulates expression of the viriditoxin biosynthesis cluster and viriditoxin synthesis. This is Transcriptional regulator VdtR from Byssochlamys spectabilis (Paecilomyces variotii).